The sequence spans 260 residues: uncharacterized protein (260 aa).

Residues 8–166 (LALGSGGARG…VDRIPVSVVK (159 aa)) form the PNPLA domain. A GXSXG motif is present at residues 39 to 43 (GSSMG). Ser41 acts as the Nucleophile in catalysis. Asp153 (proton acceptor) is an active-site residue. Residues 153 to 155 (DGA) carry the DGA/G motif.

The protein belongs to the NTE family.

This is an uncharacterized protein from Bacillus subtilis (strain 168).